The primary structure comprises 216 residues: Peptide methionine sulfoxide reductase MsrA (216 aa).

Residue Cys-54 is part of the active site.

This sequence belongs to the MsrA Met sulfoxide reductase family.

It carries out the reaction L-methionyl-[protein] + [thioredoxin]-disulfide + H2O = L-methionyl-(S)-S-oxide-[protein] + [thioredoxin]-dithiol. The enzyme catalyses [thioredoxin]-disulfide + L-methionine + H2O = L-methionine (S)-S-oxide + [thioredoxin]-dithiol. Functionally, has an important function as a repair enzyme for proteins that have been inactivated by oxidation. Catalyzes the reversible oxidation-reduction of methionine sulfoxide in proteins to methionine. The polypeptide is Peptide methionine sulfoxide reductase MsrA (Xanthomonas campestris pv. campestris (strain 8004)).